A 741-amino-acid chain; its full sequence is Catalase-peroxidase 2 (741 aa).

Positions methionine 1–alanine 28 are cleaved as a signal peptide. The tryptophyl-tyrosyl-methioninium (Trp-Tyr) (with M-254) cross-link spans tryptophan 107–tyrosine 228. The Proton acceptor role is filled by histidine 108. Residues tyrosine 228–methionine 254 constitute a cross-link (tryptophyl-tyrosyl-methioninium (Tyr-Met) (with W-107)). A heme b-binding site is contributed by histidine 269.

It belongs to the peroxidase family. Peroxidase/catalase subfamily. Homodimer or homotetramer. It depends on heme b as a cofactor. Formation of the three residue Trp-Tyr-Met cross-link is important for the catalase, but not the peroxidase activity of the enzyme.

It catalyses the reaction H2O2 + AH2 = A + 2 H2O. The enzyme catalyses 2 H2O2 = O2 + 2 H2O. Bifunctional enzyme with both catalase and broad-spectrum peroxidase activity. The sequence is that of Catalase-peroxidase 2 from Burkholderia ambifaria (strain ATCC BAA-244 / DSM 16087 / CCUG 44356 / LMG 19182 / AMMD) (Burkholderia cepacia (strain AMMD)).